A 156-amino-acid chain; its full sequence is Lipoprotein signal peptidase (156 aa).

Helical transmembrane passes span 5 to 25, 64 to 84, and 89 to 109; these read FKFI…DQWV, YLHL…KTLL, and IAFG…FIHG. Residues Asp-113 and Asp-130 contribute to the active site. Residues 122-142 traverse the membrane as a helical segment; it reads NFAIFNVADVMINISVALILI.

It belongs to the peptidase A8 family.

Its subcellular location is the cell inner membrane. The catalysed reaction is Release of signal peptides from bacterial membrane prolipoproteins. Hydrolyzes -Xaa-Yaa-Zaa-|-(S,diacylglyceryl)Cys-, in which Xaa is hydrophobic (preferably Leu), and Yaa (Ala or Ser) and Zaa (Gly or Ala) have small, neutral side chains.. It participates in protein modification; lipoprotein biosynthesis (signal peptide cleavage). Its function is as follows. This protein specifically catalyzes the removal of signal peptides from prolipoproteins. The protein is Lipoprotein signal peptidase of Campylobacter jejuni subsp. jejuni serotype O:6 (strain 81116 / NCTC 11828).